The sequence spans 562 residues: Transcriptional adapter 2A (562 aa).

Residues 91 to 146 form a ZZ-type zinc finger; it reads KDANRCATCRCSLTEPYIKCSECLDTLLCLQCFSRGKEAFSHRNNHAYIIVRDNIQ. The Zn(2+) site is built by cysteine 96, cysteine 99, cysteine 110, cysteine 113, cysteine 119, cysteine 122, histidine 132, and histidine 136. Residues 154–198 form the SANT domain; the sequence is WTARDERILLKTLRTHGYGNWEAVSQALDQRHEPAEVRRHYHDCY. In terms of domain architecture, SWIRM spans 471-562; the sequence is CLTPTEYNFS…GHISRPPSYG (92 aa).

Component of the Ada2a-containing (ATAC) complex composed of at least Ada2a, Atac1, Hcf, Ada3, Gcn5, Mocs2B, Charac-14, Atac3, Atac2, NC2beta and wds. Component of a complex that does not include Gcn5 or Ada3.

It is found in the nucleus. The protein resides in the chromosome. Component of the histone acetyltransferase (HAT) complex ATAC; predominantly involved in acetylation of histone H4, including at Lys-6 (H4K5ac) and Lys-13 (H4K12ac). May be part of several different complexes, including Gcn5-independent complexes involved in RNA polymerase II-dependent transcription. This is Transcriptional adapter 2A from Drosophila melanogaster (Fruit fly).